Here is a 483-residue protein sequence, read N- to C-terminus: Phloretin 2'-O-glucosyltransferase (483 aa).

Histidine 15 (proton acceptor) is an active-site residue. Position 15 (histidine 15) interacts with an anthocyanidin. Aspartate 118 (charge relay) is an active-site residue. UDP-alpha-D-glucose is bound by residues threonine 140, alanine 360, glutamine 362, histidine 377, tryptophan 380, asparagine 381, serine 382, and glutamate 385. Alanine 400 lines the an anthocyanidin pocket. Residues glutamate 401 and glutamine 402 each coordinate UDP-alpha-D-glucose.

This sequence belongs to the UDP-glycosyltransferase family.

The catalysed reaction is phloretin + UDP-alpha-D-glucose = phlorizin + UDP + H(+). Functionally, glycosyltransferase that possesses phloretin 2'-O-glycosyltransferase activity. Converts phloretin to phlorizin (phloretin 2'-O-glucoside), a potent antioxidant. Is specific for phloretin and does not possess glycosyltransferase activity toward caffeic acid, catechin, chlorogenic acid, 2-coumaric acid, 3-coumaric acid, 4-coumaric acid, cyanidin, 3,4-dihydroxyhydrocinnamic acid, epicatechin, 3-hydroxybenzoic acid, naringenin, 3,4-dihydroxybenzoic acid, quercetin and rutin. Can glycosylate phloretin in the presence of UDP-glucose, UDP-xylose and UDP-galactose. The polypeptide is Phloretin 2'-O-glucosyltransferase (Malus domestica (Apple)).